Reading from the N-terminus, the 407-residue chain is Peptidase T (407 aa).

His77 lines the Zn(2+) pocket. Asp79 is an active-site residue. A Zn(2+)-binding site is contributed by Asp138. Residue Glu172 is the Proton acceptor of the active site. Glu173, Asp195, and His377 together coordinate Zn(2+).

It belongs to the peptidase M20B family. Zn(2+) is required as a cofactor.

The protein resides in the cytoplasm. It catalyses the reaction Release of the N-terminal residue from a tripeptide.. In terms of biological role, cleaves the N-terminal amino acid of tripeptides. The sequence is that of Peptidase T from Aeromonas hydrophila subsp. hydrophila (strain ATCC 7966 / DSM 30187 / BCRC 13018 / CCUG 14551 / JCM 1027 / KCTC 2358 / NCIMB 9240 / NCTC 8049).